Reading from the N-terminus, the 746-residue chain is WD repeat-containing protein 91 (746 aa).

Positions 183 to 215 form a coiled coil; sequence QRTNQVQEENEVLRQKLFALQAEIHRLKKEEQQ. Phosphoserine is present on Ser-256. Residues 265–278 are compositionally biased toward low complexity; sequence LLPQSKKSPSRLSP. Residues 265–336 form a disordered region; the sequence is LLPQSKKSPS…QHRQRRLQDH (72 aa). The span at 282–299 shows a compositional bias: polar residues; sequence PPQTQSSAKKESFGSQTT. Residues Ser-288 and Ser-293 each carry the phosphoserine modification. 7 WD repeats span residues 405–444, 447–487, 514–554, 559–598, 601–640, 663–701, and 708–746; these read EHHSSIMHCRVDCSGRRVASLDVDGVIKVWSFNPIMQTKA, ISKS…NLCE, AASS…QQLQ, PEPIAINCTAFNHNGNLLVTGAADGVIRLFDMQQHECAMS, AHCGEVYSVEFSYDENTVYSIGEDGKFIQWNIHKSGLKVS, VQVPRGRLFAFDSEGNYMLTCSATGGVIYKLGGDDKVLE, and GHRAPVVTVDWSTAMDCGTCLTASMDGKIKLTTLLAHKV.

This sequence belongs to the WD repeat WDR91 family. Interacts with WDR81; involved in early to late endosome cargo transport. Interacts with BECN1; negatively regulates the PI3 kinase/PI3K activity associated with endosomal membranes.

It is found in the early endosome membrane. The protein resides in the late endosome membrane. Functionally, functions as a negative regulator of the PI3 kinase/PI3K activity associated with endosomal membranes via BECN1, a core subunit of the PI3K complex. By modifying the phosphatidylinositol 3-phosphate/PtdInsP3 content of endosomal membranes may regulate endosome fusion, recycling, sorting and early to late endosome transport. It is for instance, required for the delivery of cargos like BST2/tetherin from early to late endosome and thereby participates indirectly to their degradation by the lysosome. May play a role in meiosis. This is WD repeat-containing protein 91 from Bos taurus (Bovine).